The sequence spans 442 residues: Glutamyl-tRNA reductase (442 aa).

Residues 50 to 53 (TCNR), Ser-109, 114 to 116 (EPQ), and Gln-120 each bind substrate. Cys-51 acts as the Nucleophile in catalysis. NADP(+) is bound at residue 189 to 194 (GAGEMA).

The protein belongs to the glutamyl-tRNA reductase family. As to quaternary structure, homodimer.

It catalyses the reaction (S)-4-amino-5-oxopentanoate + tRNA(Glu) + NADP(+) = L-glutamyl-tRNA(Glu) + NADPH + H(+). The protein operates within porphyrin-containing compound metabolism; protoporphyrin-IX biosynthesis; 5-aminolevulinate from L-glutamyl-tRNA(Glu): step 1/2. In terms of biological role, catalyzes the NADPH-dependent reduction of glutamyl-tRNA(Glu) to glutamate 1-semialdehyde (GSA). This chain is Glutamyl-tRNA reductase, found in Nitratidesulfovibrio vulgaris (strain DSM 19637 / Miyazaki F) (Desulfovibrio vulgaris).